A 264-amino-acid polypeptide reads, in one-letter code: Glutamate racemase (264 aa).

Substrate is bound by residues 10–11 (DS) and 42–43 (YG). The Proton donor/acceptor role is filled by Cys73. 74-75 (NT) is a binding site for substrate. Residue Cys181 is the Proton donor/acceptor of the active site. Position 182 to 183 (182 to 183 (TH)) interacts with substrate.

It belongs to the aspartate/glutamate racemases family.

The enzyme catalyses L-glutamate = D-glutamate. It participates in cell wall biogenesis; peptidoglycan biosynthesis. Provides the (R)-glutamate required for cell wall biosynthesis. The sequence is that of Glutamate racemase from Thermoanaerobacter pseudethanolicus (strain ATCC 33223 / 39E) (Clostridium thermohydrosulfuricum).